Reading from the N-terminus, the 680-residue chain is DNA-directed RNA polymerase subunit beta' (680 aa).

Zn(2+)-binding residues include cysteine 69, cysteine 71, cysteine 87, and cysteine 90. Mg(2+) is bound by residues aspartate 489, aspartate 491, and aspartate 493.

The protein belongs to the RNA polymerase beta' chain family. RpoC1 subfamily. In plastids the minimal PEP RNA polymerase catalytic core is composed of four subunits: alpha, beta, beta', and beta''. When a (nuclear-encoded) sigma factor is associated with the core the holoenzyme is formed, which can initiate transcription. Mg(2+) is required as a cofactor. Zn(2+) serves as cofactor.

It is found in the plastid. Its subcellular location is the chloroplast. The catalysed reaction is RNA(n) + a ribonucleoside 5'-triphosphate = RNA(n+1) + diphosphate. Its function is as follows. DNA-dependent RNA polymerase catalyzes the transcription of DNA into RNA using the four ribonucleoside triphosphates as substrates. This chain is DNA-directed RNA polymerase subunit beta', found in Manihot esculenta (Cassava).